Reading from the N-terminus, the 358-residue chain is 3-dehydroquinate synthase (358 aa).

Residues 70 to 75 (DGEAHK), 104 to 108 (GVIGD), 128 to 129 (TT), K141, and K150 contribute to the NAD(+) site. Residues E183, H246, and H263 each coordinate Zn(2+).

The protein belongs to the sugar phosphate cyclases superfamily. Dehydroquinate synthase family. NAD(+) serves as cofactor. Co(2+) is required as a cofactor. Requires Zn(2+) as cofactor.

It localises to the cytoplasm. It catalyses the reaction 7-phospho-2-dehydro-3-deoxy-D-arabino-heptonate = 3-dehydroquinate + phosphate. It participates in metabolic intermediate biosynthesis; chorismate biosynthesis; chorismate from D-erythrose 4-phosphate and phosphoenolpyruvate: step 2/7. Catalyzes the conversion of 3-deoxy-D-arabino-heptulosonate 7-phosphate (DAHP) to dehydroquinate (DHQ). The polypeptide is 3-dehydroquinate synthase (Bordetella bronchiseptica (strain ATCC BAA-588 / NCTC 13252 / RB50) (Alcaligenes bronchisepticus)).